The following is a 420-amino-acid chain: uncharacterized protein (420 aa).

Residues 1–25 (MRYAMNKIPALLLVGALIIATVASG) form the signal peptide. At cysteine 26 the chain carries N-acetylcysteine. Cysteine 26 carries S-archaeol cysteine lipidation.

It belongs to the bacterial solute-binding protein 1 family.

It localises to the cell membrane. Its function is as follows. Probably part of a binding-protein-dependent transport system PH1036/38/39. This is an uncharacterized protein from Pyrococcus horikoshii (strain ATCC 700860 / DSM 12428 / JCM 9974 / NBRC 100139 / OT-3).